The sequence spans 148 residues: Transcription antitermination protein NusB (148 aa).

This sequence belongs to the NusB family.

Its function is as follows. Involved in transcription antitermination. Required for transcription of ribosomal RNA (rRNA) genes. Binds specifically to the boxA antiterminator sequence of the ribosomal RNA (rrn) operons. In Desulfitobacterium hafniense (strain DSM 10664 / DCB-2), this protein is Transcription antitermination protein NusB.